The sequence spans 345 residues: Phosphoribosylformylglycinamidine cyclo-ligase (345 aa).

The protein belongs to the AIR synthase family.

Its subcellular location is the cytoplasm. The catalysed reaction is 2-formamido-N(1)-(5-O-phospho-beta-D-ribosyl)acetamidine + ATP = 5-amino-1-(5-phospho-beta-D-ribosyl)imidazole + ADP + phosphate + H(+). Its pathway is purine metabolism; IMP biosynthesis via de novo pathway; 5-amino-1-(5-phospho-D-ribosyl)imidazole from N(2)-formyl-N(1)-(5-phospho-D-ribosyl)glycinamide: step 2/2. This chain is Phosphoribosylformylglycinamidine cyclo-ligase, found in Prochlorococcus marinus (strain MIT 9211).